Here is a 339-residue protein sequence, read N- to C-terminus: Dihydroorotate dehydrogenase (quinone) (339 aa).

FMN contacts are provided by residues 64 to 68 and threonine 88; that span reads AGADK. Residue lysine 68 coordinates substrate. 113-117 contributes to the substrate binding site; the sequence is NRNGF. The FMN site is built by asparagine 141 and asparagine 174. Asparagine 174 provides a ligand contact to substrate. The Nucleophile role is filled by serine 177. Asparagine 179 serves as a coordination point for substrate. 2 residues coordinate FMN: lysine 219 and threonine 247. Residue 248-249 coordinates substrate; the sequence is NT. FMN-binding positions include glycine 270, glycine 299, and 320-321; that span reads YS.

Belongs to the dihydroorotate dehydrogenase family. Type 2 subfamily. Monomer. FMN is required as a cofactor.

It localises to the cell membrane. The catalysed reaction is (S)-dihydroorotate + a quinone = orotate + a quinol. Its pathway is pyrimidine metabolism; UMP biosynthesis via de novo pathway; orotate from (S)-dihydroorotate (quinone route): step 1/1. Functionally, catalyzes the conversion of dihydroorotate to orotate with quinone as electron acceptor. The polypeptide is Dihydroorotate dehydrogenase (quinone) (Haemophilus influenzae (strain 86-028NP)).